Reading from the N-terminus, the 236-residue chain is Ribosome-inactivating protein saporin-3 (236 aa).

Residue glutamate 148 is part of the active site.

Belongs to the ribosome-inactivating protein family. Type 1 RIP subfamily.

The enzyme catalyses Endohydrolysis of the N-glycosidic bond at one specific adenosine on the 28S rRNA.. In terms of biological role, ribosome-inactivating protein of type 1, inhibits protein synthesis in animal cells. Useful as immunotoxin for pharmacological applications. The chain is Ribosome-inactivating protein saporin-3 (SAP3) from Saponaria officinalis (Common soapwort).